Consider the following 322-residue polypeptide: Ribose-phosphate pyrophosphokinase 1 (322 aa).

Residues 39 to 41 (DGE) and 98 to 99 (RQ) contribute to the ATP site. His-132 and Asp-173 together coordinate Mg(2+). Residue Lys-196 is part of the active site. Residues Arg-198, Asp-224, and 228 to 232 (DTAGT) contribute to the D-ribose 5-phosphate site.

Belongs to the ribose-phosphate pyrophosphokinase family. Class I subfamily. Homohexamer. Requires Mg(2+) as cofactor.

The protein resides in the cytoplasm. It carries out the reaction D-ribose 5-phosphate + ATP = 5-phospho-alpha-D-ribose 1-diphosphate + AMP + H(+). The protein operates within metabolic intermediate biosynthesis; 5-phospho-alpha-D-ribose 1-diphosphate biosynthesis; 5-phospho-alpha-D-ribose 1-diphosphate from D-ribose 5-phosphate (route I): step 1/1. Functionally, involved in the biosynthesis of the central metabolite phospho-alpha-D-ribosyl-1-pyrophosphate (PRPP) via the transfer of pyrophosphoryl group from ATP to 1-hydroxyl of ribose-5-phosphate (Rib-5-P). The sequence is that of Ribose-phosphate pyrophosphokinase 1 from Streptococcus mutans serotype c (strain ATCC 700610 / UA159).